A 561-amino-acid polypeptide reads, in one-letter code: Arginine--tRNA ligase (561 aa).

A 'HIGH' region motif is present at residues 136–146 (ANPTGLLHMGN).

The protein belongs to the class-I aminoacyl-tRNA synthetase family. Monomer.

It localises to the cytoplasm. It carries out the reaction tRNA(Arg) + L-arginine + ATP = L-arginyl-tRNA(Arg) + AMP + diphosphate. The chain is Arginine--tRNA ligase from Desulforamulus reducens (strain ATCC BAA-1160 / DSM 100696 / MI-1) (Desulfotomaculum reducens).